Here is a 196-residue protein sequence, read N- to C-terminus: UDP-N-acetylglucosamine transferase subunit ALG13 (196 aa).

This sequence belongs to the glycosyltransferase 28 family. Heterodimer with ALG14 to form a functional enzyme.

Its subcellular location is the endoplasmic reticulum. The enzyme catalyses an N-acetyl-alpha-D-glucosaminyl-diphospho-di-trans,poly-cis-dolichol + UDP-N-acetyl-alpha-D-glucosamine = an N,N'-diacetylchitobiosyl-diphospho-di-trans,poly-cis-dolichol + UDP + H(+). In terms of biological role, involved in protein N-glycosylation. Essential for the second step of the dolichol-linked oligosaccharide pathway. This chain is UDP-N-acetylglucosamine transferase subunit ALG13 (ALG13), found in Yarrowia lipolytica (strain CLIB 122 / E 150) (Yeast).